Here is a 155-residue protein sequence, read N- to C-terminus: IFN signaling evasion protein OPG029 (155 aa).

Belongs to the orthopoxvirus OPG029 family. Interacts with host TANK, TBKBP1 and AZI2; these interactions prevent interferon production. Interacts with host STAT2.

Prevents establishment of cellular antiviral state by blocking virus-induced phosphorylation and activation of interferon regulatory factors 3/IRF3 and 7/IRF7, transcription factors critical for the induction of interferons alpha and beta. This blockage is produced through the inhibition of host TBK1, by binding host TBK1 adapter proteins TBKBP1 and AZI2, thereby producing a strong inhibition of the phosphorylation and activation of IRF3 and IRF7. Also acts as an inhibitor of the cellular response to type I IFN by interacting with host STAT2. Mechanistically, exerts its inhibitory effect after host ISGF3 complex (composed of STAT1, STAT2 and IRF9) binding to the interferon stimulated response element (ISRE). The protein is IFN signaling evasion protein OPG029 (OPG019) of Cynomys gunnisoni (Gunnison's prairie dog).